The sequence spans 274 residues: Large ribosomal subunit protein uL2 (274 aa).

Disordered stretches follow at residues 40–59 (SGGR…GGHK) and 223–274 (VAMN…RRSR). Basic residues-rich tracts occupy residues 49–59 (VTRRHQGGGHK) and 256–274 (YRTR…RRSR).

Belongs to the universal ribosomal protein uL2 family. As to quaternary structure, part of the 50S ribosomal subunit. Forms a bridge to the 30S subunit in the 70S ribosome.

One of the primary rRNA binding proteins. Required for association of the 30S and 50S subunits to form the 70S ribosome, for tRNA binding and peptide bond formation. It has been suggested to have peptidyltransferase activity; this is somewhat controversial. Makes several contacts with the 16S rRNA in the 70S ribosome. This Acidithiobacillus ferrooxidans (strain ATCC 23270 / DSM 14882 / CIP 104768 / NCIMB 8455) (Ferrobacillus ferrooxidans (strain ATCC 23270)) protein is Large ribosomal subunit protein uL2.